Reading from the N-terminus, the 404-residue chain is Phosphoribulokinase, chloroplastic (404 aa).

The transit peptide at methionine 1 to cysteine 53 directs the protein to the chloroplast. Residues cysteine 69 and cysteine 108 are joined by a disulfide bond.

The protein belongs to the phosphoribulokinase family.

The protein resides in the plastid. The protein localises to the chloroplast. It carries out the reaction D-ribulose 5-phosphate + ATP = D-ribulose 1,5-bisphosphate + ADP + H(+). It functions in the pathway carbohydrate biosynthesis; Calvin cycle. Light regulated via thioredoxin by reversible oxidation/reduction of sulfhydryl/disulfide groups. In Triticum aestivum (Wheat), this protein is Phosphoribulokinase, chloroplastic.